Reading from the N-terminus, the 456-residue chain is Flagellum-specific ATP synthase (456 aa).

182–189 provides a ligand contact to ATP; the sequence is AGSGVGKS.

It belongs to the ATPase alpha/beta chains family.

The protein resides in the cytoplasm. It carries out the reaction ATP + H2O + 4 H(+)(in) = ADP + phosphate + 5 H(+)(out). In terms of biological role, probable catalytic subunit of a protein translocase for flagellum-specific export, or a proton translocase involved in local circuits at the flagellum. May be involved in a specialized protein export pathway that proceeds without signal peptide cleavage. The sequence is that of Flagellum-specific ATP synthase (fliI) from Salmonella typhimurium (strain LT2 / SGSC1412 / ATCC 700720).